A 302-amino-acid polypeptide reads, in one-letter code: Trans-4-hydroxy-L-proline dehydratase activating enzyme (302 aa).

Positions 14-297 (HDGPGIRSTV…KRLFEASNFN (284 aa)) constitute a Radical SAM core domain. [4Fe-4S] cluster contacts are provided by Cys-28, Cys-32, Cys-35, Cys-54, Cys-57, Cys-60, and Cys-93. S-adenosyl-L-methionine is bound at residue 34–36 (WCH). 4Fe-4S ferredoxin-type domains are found at residues 45–74 (KQVL…KGET) and 75–103 (KICL…IVGQ). Residues Gly-133, 183 to 185 (DIK), and His-257 each bind S-adenosyl-L-methionine.

The protein belongs to the organic radical-activating enzymes family. The cofactor is [4Fe-4S] cluster.

It catalyses the reaction glycyl-[protein] + reduced [flavodoxin] + S-adenosyl-L-methionine = glycin-2-yl radical-[protein] + semiquinone [flavodoxin] + 5'-deoxyadenosine + L-methionine + H(+). In terms of biological role, catalyzes activation of the trans-4-hydroxy-L-proline dehydratase under anaerobic conditions by generation of an organic free radical on a glycine residue, via a homolytic cleavage of S-adenosyl-L-methionine (SAM). Is involved in the anaerobic degradation of 4-hydroxyproline. This is Trans-4-hydroxy-L-proline dehydratase activating enzyme from Clostridioides difficile (Peptoclostridium difficile).